Consider the following 206-residue polypeptide: Outer-membrane lipoprotein carrier protein (206 aa).

Residues 1–23 (MKPLFPMLTAAAIAAGLAAPAQA) form the signal peptide.

The protein belongs to the LolA family. As to quaternary structure, monomer.

Its subcellular location is the periplasm. In terms of biological role, participates in the translocation of lipoproteins from the inner membrane to the outer membrane. Only forms a complex with a lipoprotein if the residue after the N-terminal Cys is not an aspartate (The Asp acts as a targeting signal to indicate that the lipoprotein should stay in the inner membrane). This is Outer-membrane lipoprotein carrier protein from Chromobacterium violaceum (strain ATCC 12472 / DSM 30191 / JCM 1249 / CCUG 213 / NBRC 12614 / NCIMB 9131 / NCTC 9757 / MK).